Consider the following 90-residue polypeptide: Small ribosomal subunit protein bS16 (90 aa).

The protein belongs to the bacterial ribosomal protein bS16 family.

This is Small ribosomal subunit protein bS16 from Lactiplantibacillus plantarum (strain ATCC BAA-793 / NCIMB 8826 / WCFS1) (Lactobacillus plantarum).